Consider the following 458-residue polypeptide: Ribulose bisphosphate carboxylase (458 aa).

Asn-111 contacts substrate. The active-site Proton acceptor is Lys-166. Residue Lys-168 coordinates substrate. Lys-191, Asp-193, and Glu-194 together coordinate Mg(2+). Lys-191 carries the N6-carboxylysine modification. His-287 acts as the Proton acceptor in catalysis. The substrate site is built by Arg-288, His-321, and Ser-368.

The protein belongs to the RuBisCO large chain family. Type II subfamily. As to quaternary structure, homodimer. Mg(2+) is required as a cofactor.

The catalysed reaction is 2 (2R)-3-phosphoglycerate + 2 H(+) = D-ribulose 1,5-bisphosphate + CO2 + H2O. The enzyme catalyses D-ribulose 1,5-bisphosphate + O2 = 2-phosphoglycolate + (2R)-3-phosphoglycerate + 2 H(+). In terms of biological role, ruBisCO catalyzes two reactions: the carboxylation of D-ribulose 1,5-bisphosphate, the primary event in carbon dioxide fixation, as well as the oxidative fragmentation of the pentose substrate. Both reactions occur simultaneously and in competition at the same active site. This Rhodobacter capsulatus (Rhodopseudomonas capsulata) protein is Ribulose bisphosphate carboxylase (cbbM).